The following is a 937-amino-acid chain: Isoleucine--tRNA ligase (937 aa).

Positions 58 to 68 (PYANGSIHIGH) match the 'HIGH' region motif. Glu-561 is an L-isoleucyl-5'-AMP binding site. The 'KMSKS' region motif lies at 602–606 (KMSKS). Residue Lys-605 coordinates ATP. Residues Cys-900, Cys-903, Cys-920, and Cys-923 each contribute to the Zn(2+) site.

This sequence belongs to the class-I aminoacyl-tRNA synthetase family. IleS type 1 subfamily. In terms of assembly, monomer. Zn(2+) is required as a cofactor.

The protein resides in the cytoplasm. It carries out the reaction tRNA(Ile) + L-isoleucine + ATP = L-isoleucyl-tRNA(Ile) + AMP + diphosphate. In terms of biological role, catalyzes the attachment of isoleucine to tRNA(Ile). As IleRS can inadvertently accommodate and process structurally similar amino acids such as valine, to avoid such errors it has two additional distinct tRNA(Ile)-dependent editing activities. One activity is designated as 'pretransfer' editing and involves the hydrolysis of activated Val-AMP. The other activity is designated 'posttransfer' editing and involves deacylation of mischarged Val-tRNA(Ile). This is Isoleucine--tRNA ligase from Pectobacterium atrosepticum (strain SCRI 1043 / ATCC BAA-672) (Erwinia carotovora subsp. atroseptica).